The following is a 54-amino-acid chain: Light-harvesting protein B-870 beta chain (54 aa).

Residues E1 to K20 lie on the Cytoplasmic side of the membrane. Residues H19 and H37 each coordinate a bacteriochlorophyll. The helical transmembrane segment at I21 to W43 threads the bilayer. Over R44 to S54 the chain is Periplasmic.

The protein belongs to the antenna complex beta subunit family. In terms of assembly, the core complex is formed by different alpha and beta chains, binding bacteriochlorophyll molecules, and arranged most probably in tetrameric structures disposed around the reaction center. The non-pigmented gamma chains may constitute additional components.

It localises to the cell inner membrane. Antenna complexes are light-harvesting systems, which transfer the excitation energy to the reaction centers. The polypeptide is Light-harvesting protein B-870 beta chain (Rhodospirillum rubrum).